The following is a 472-amino-acid chain: 3-isopropylmalate dehydratase large subunit (472 aa).

3 residues coordinate [4Fe-4S] cluster: C353, C414, and C417.

This sequence belongs to the aconitase/IPM isomerase family. LeuC type 1 subfamily. Heterodimer of LeuC and LeuD. Requires [4Fe-4S] cluster as cofactor.

The enzyme catalyses (2R,3S)-3-isopropylmalate = (2S)-2-isopropylmalate. Its pathway is amino-acid biosynthesis; L-leucine biosynthesis; L-leucine from 3-methyl-2-oxobutanoate: step 2/4. In terms of biological role, catalyzes the isomerization between 2-isopropylmalate and 3-isopropylmalate, via the formation of 2-isopropylmaleate. The chain is 3-isopropylmalate dehydratase large subunit from Psychrobacter arcticus (strain DSM 17307 / VKM B-2377 / 273-4).